A 373-amino-acid chain; its full sequence is Phospho-N-acetylmuramoyl-pentapeptide-transferase (373 aa).

The next 10 helical transmembrane spans lie at 28-48 (LLTV…TIAY), 72-92 (TPTM…LCWA), 94-114 (LANP…AVGW), 135-155 (YFWL…IASQ), 177-197 (IVPL…YFVI), 212-232 (GLAI…SYVS), 252-272 (VTIV…YNAH), 276-296 (VFMG…IAVM), 301-321 (IAFA…ILQV), and 350-370 (QVVV…LMTL).

This sequence belongs to the glycosyltransferase 4 family. MraY subfamily. Mg(2+) serves as cofactor.

It localises to the cell inner membrane. It catalyses the reaction UDP-N-acetyl-alpha-D-muramoyl-L-alanyl-gamma-D-glutamyl-meso-2,6-diaminopimeloyl-D-alanyl-D-alanine + di-trans,octa-cis-undecaprenyl phosphate = di-trans,octa-cis-undecaprenyl diphospho-N-acetyl-alpha-D-muramoyl-L-alanyl-D-glutamyl-meso-2,6-diaminopimeloyl-D-alanyl-D-alanine + UMP. Its pathway is cell wall biogenesis; peptidoglycan biosynthesis. Its function is as follows. Catalyzes the initial step of the lipid cycle reactions in the biosynthesis of the cell wall peptidoglycan: transfers peptidoglycan precursor phospho-MurNAc-pentapeptide from UDP-MurNAc-pentapeptide onto the lipid carrier undecaprenyl phosphate, yielding undecaprenyl-pyrophosphoryl-MurNAc-pentapeptide, known as lipid I. This is Phospho-N-acetylmuramoyl-pentapeptide-transferase from Psychrobacter sp. (strain PRwf-1).